The following is a 243-amino-acid chain: Venom nerve growth factor 2 (243 aa).

The N-terminal stretch at 1–18 (MSMLCYTLIIAFLIGIWA) is a signal peptide. Residues 19-125 (APKSEDNVPL…TLNRNIRAKR (107 aa)) constitute a propeptide that is removed on maturation. Residues 47–66 (GLKTSRNTDQRHPAPKKAED) are compositionally biased toward basic and acidic residues. Residues 47 to 67 (GLKTSRNTDQRHPAPKKAEDQ) are disordered. 2 cysteine pairs are disulfide-bonded: Cys-139/Cys-204 and Cys-192/Cys-234. Asn-148 is a glycosylation site (N-linked (GlcNAc...) asparagine).

This sequence belongs to the NGF-beta family. Homodimer; non-covalently linked. As to expression, expressed by the venom gland.

Its subcellular location is the secreted. Nerve growth factor is important for the development and maintenance of the sympathetic and sensory nervous systems. It stimulates division and differentiation of sympathetic and embryonic sensory neurons as well as basal forebrain cholinergic neurons in the brain. Its relevance in the snake venom is not clear. However, it has been shown to inhibit metalloproteinase-dependent proteolysis of platelet glycoprotein Ib alpha, suggesting a metalloproteinase inhibition to prevent metalloprotease autodigestion and/or protection against prey proteases. Binds a lipid between the two protein chains in the homodimer. The lipid-bound form promotes histamine relase from mouse mast cells, contrary to the lipid-free form. This chain is Venom nerve growth factor 2, found in Pseudonaja textilis (Eastern brown snake).